The primary structure comprises 328 residues: DNA-directed RNA polymerase subunit alpha 2 (328 aa).

The interval 1–234 (MQGSVIEFLK…EQLDAFVDLR (234 aa)) is alpha N-terminal domain (alpha-NTD). Residues 248 to 328 (FDPILLRPVD…NWPPASLSED (81 aa)) form an alpha C-terminal domain (alpha-CTD) region.

It belongs to the RNA polymerase alpha chain family. Homodimer. The RNAP catalytic core consists of 2 alpha, 1 beta, 1 beta' and 1 omega subunit. When a sigma factor is associated with the core the holoenzyme is formed, which can initiate transcription.

The catalysed reaction is RNA(n) + a ribonucleoside 5'-triphosphate = RNA(n+1) + diphosphate. Its function is as follows. DNA-dependent RNA polymerase catalyzes the transcription of DNA into RNA using the four ribonucleoside triphosphates as substrates. The polypeptide is DNA-directed RNA polymerase subunit alpha 2 (Psychromonas ingrahamii (strain DSM 17664 / CCUG 51855 / 37)).